Consider the following 104-residue polypeptide: Flagellar hook-basal body complex protein FliE (104 aa).

Belongs to the FliE family.

The protein localises to the bacterial flagellum basal body. The polypeptide is Flagellar hook-basal body complex protein FliE (Pectobacterium atrosepticum (strain SCRI 1043 / ATCC BAA-672) (Erwinia carotovora subsp. atroseptica)).